A 100-amino-acid chain; its full sequence is UPF0213 protein YhbQ (100 aa).

The region spanning 2–77 is the GIY-YIG domain; that stretch reads TPWYLYLIRT…KQLTKRQKER (76 aa).

It belongs to the UPF0213 family.

The sequence is that of UPF0213 protein YhbQ from Salmonella choleraesuis (strain SC-B67).